Here is a 155-residue protein sequence, read N- to C-terminus: MGVSVKPAARRNARQFALQAIYSWQLSKENVADIEEQFLTAEKYDEEEHHANEPKLQTPETDVAYFRDLFSGVALNHMKLDGKMRPYLSRPLQDLDQMELALLRMSIYEMMNRDDVPYKVVINEAIELAKVFAAEDSHKFVNGVLDKAAPTLRKK.

The protein belongs to the NusB family.

In terms of biological role, involved in transcription antitermination. Required for transcription of ribosomal RNA (rRNA) genes. Binds specifically to the boxA antiterminator sequence of the ribosomal RNA (rrn) operons. This is Transcription antitermination protein NusB from Aliivibrio fischeri (strain ATCC 700601 / ES114) (Vibrio fischeri).